Consider the following 210-residue polypeptide: 3-hexulose-6-phosphate synthase (210 aa).

It belongs to the HPS/KGPDC family. HPS subfamily.

The enzyme catalyses D-ribulose 5-phosphate + formaldehyde = D-arabino-hex-3-ulose 6-phosphate. It functions in the pathway one-carbon metabolism; formaldehyde assimilation via RuMP pathway; D-fructose 6-phosphate from D-ribulose 5-phosphate and formaldehyde: step 1/2. Functionally, catalyzes the condensation of ribulose 5-phosphate with formaldehyde to form 3-hexulose 6-phosphate. This chain is 3-hexulose-6-phosphate synthase, found in Staphylococcus epidermidis (strain ATCC 35984 / DSM 28319 / BCRC 17069 / CCUG 31568 / BM 3577 / RP62A).